The chain runs to 1375 residues: MDSSPNKKTYRYPRRSLSLHARDRVSEARKLEELNLNDGLVAAGLQLVGVALEKQGTGSHIYMKQKNFSANDVSSSPMVSEEVNGSEMDFNPKCMPQDASLVERMFDELLKDGTFFWGAAYKNLQNISLRRKWLLICKIRSSNHWGKKKVTSSTTYSTHLATNELAENAHFLDGLVRNLSTGGMKLSKALYKLEKFLRKQSFLQLFLKDEIYLTTLIEKTLPLISKELQFVYLRCFKILMNNPLARIRALHSEPLIRWFTELLTDQNSNLKCQLLSMELLLLLTYVEGSTGCELIWDQLSILFTDWLEWFDKILADDIAIHSSLYLNWNQLKIDYSTTFLLLINSILQGFNNKTALEILNFLKKNNIHNTITFLELAYKDDPNSVVIMEQIKQFKSKESAIFDSMIKTTNDTNSLHPTKDIARIESEPLCLENCLLLKAKDSPVEAPINEIIQSLWKILDSQKPYSESIKLLKLINSLLFYLIDSFQVSTNPSFDETLESAENVDYVFQDSVNKLLDSLQSDEIARRAVTEIDDLNAKISHLNEKLNLVENHDKDHLIAKLDESESLISLKTKEIENLKLQLKATKKRLDQITTHQRLYDQPPSLASSNLSIAGSIIKNNSHGNIIFQNLAKKQQQQQKISLPKRSTSLLKSKRVTSLSSYLTDANNENESQNESEDKSKDSLFQRSTSTINFNIPSMKNITNMQNVSLNSILSELEFSNSLGTQPNYQSSPVLSSVSSSPKLFPRLSSDSLDNGIQLVPEVVKLPQLPPPPPPPPPPPLPQSLLTEAEAKPDGVSCIAAPAPPPLPDLFKTKTCGAVPPPPPPPPLPESLSMNKGPSNHDLVTPPAPPLPNGLLSSSSVSINPTTTDLKPPPTEKRLKQIHWDKVEDIKDTLWEDTFQRQETIKELQTDGIFSQIEDIFKMKSPTKIANKRNAESSIALSSNNGKSSNELKKISFLSRDLAQQFGINLHMFSQLSDMEFVMKVLNCDNDIVQNVNILKFFCKEELVNIPKSMLNKYEPYSQGKDGKAVSDLQRADRIFLELCINLRFYWNARSKSLLTLSTYERDYYDLIFKLQKIDDAISHLNRSPKFKSLMFIITEIGNHMNKRIVKGIKLKSLTKLAFVRSSIDQNVSFLHFIEKVIRIKYPDIYGFVDDLKNIEDLGKISLEHVESECHEFHKKIEDLVTQFQVGKLSKEENLDPRDQIIKKVKFKINRAKTKSELLIGQCKLTLIDLNKLMKYYGEDPKDKESKNEFFQPFIEFLAMFKKCAKENIEKEEMERVYEQRKSLLDMRTSSNKKSNGSDENDGEKVNRDAVDLLISKLREVKKDPEPLRRRKSTKLNEIAINVHEGDVKTRKDEDHVLLERTHAMLNDIQNI.

In terms of domain architecture, GBD/FH3 spans 94–490 (CMPQDASLVE…YLIDSFQVST (397 aa)). Positions 520 to 601 (QSDEIARRAV…ITTHQRLYDQ (82 aa)) form a coiled coil. Serine 621 is modified (phosphoserine). In terms of domain architecture, FH1 spans 659–851 (SSYLTDANNE…LVTPPAPPLP (193 aa)). The interval 661 to 684 (YLTDANNENESQNESEDKSKDSLF) is disordered. Serine 751 carries the phosphoserine modification. 3 disordered regions span residues 764–785 (KLPQLPPPPPPPPPPPLPQSLL), 817–839 (AVPPPPPPPPLPESLSMNKGPSN), and 1285–1309 (KSLLDMRTSSNKKSNGSDENDGEKV). Composition is skewed to pro residues over residues 767–781 (QLPPPPPPPPPPPLP) and 818–828 (VPPPPPPPPLP). The FH2 domain occupies 868–1290 (DLKPPPTEKR…YEQRKSLLDM (423 aa)). The DAD domain maps to 1302–1336 (DENDGEKVNRDAVDLLISKLREVKKDPEPLRRRKS).

Belongs to the formin homology family. BNI1 subfamily. As to quaternary structure, interacts with profilin at the FH1 domain.

In terms of biological role, may organize microtubules by mediating spindle positioning and movement in the budding process. Potential target of the RHO family members. The chain is BNI1-related protein 1 (BNR1) from Saccharomyces cerevisiae (strain ATCC 204508 / S288c) (Baker's yeast).